The chain runs to 145 residues: Deoxyuridine 5'-triphosphate nucleotidohydrolase (145 aa).

Residues 64–66 (RSG), Asn77, 81–83 (TID), and Met91 contribute to the substrate site.

This sequence belongs to the dUTPase family. Mg(2+) serves as cofactor.

It catalyses the reaction dUTP + H2O = dUMP + diphosphate + H(+). It participates in pyrimidine metabolism; dUMP biosynthesis; dUMP from dCTP (dUTP route): step 2/2. Its function is as follows. This enzyme is involved in nucleotide metabolism: it produces dUMP, the immediate precursor of thymidine nucleotides and it decreases the intracellular concentration of dUTP so that uracil cannot be incorporated into DNA. In Leptospira borgpetersenii serovar Hardjo-bovis (strain JB197), this protein is Deoxyuridine 5'-triphosphate nucleotidohydrolase.